Consider the following 226-residue polypeptide: 2-C-methyl-D-erythritol 4-phosphate cytidylyltransferase (226 aa).

The protein belongs to the IspD/TarI cytidylyltransferase family. IspD subfamily.

It catalyses the reaction 2-C-methyl-D-erythritol 4-phosphate + CTP + H(+) = 4-CDP-2-C-methyl-D-erythritol + diphosphate. It functions in the pathway isoprenoid biosynthesis; isopentenyl diphosphate biosynthesis via DXP pathway; isopentenyl diphosphate from 1-deoxy-D-xylulose 5-phosphate: step 2/6. Functionally, catalyzes the formation of 4-diphosphocytidyl-2-C-methyl-D-erythritol from CTP and 2-C-methyl-D-erythritol 4-phosphate (MEP). In Thermosipho africanus (strain TCF52B), this protein is 2-C-methyl-D-erythritol 4-phosphate cytidylyltransferase.